Consider the following 210-residue polypeptide: MELQLAIDLLNKEDAAELANKVKDYVDIVEIGTPIIYNEGLPAVKHMADNISNVKVLADMKIIDAADYEVSQAIKFGADVITILGVAEDASIKAAIEEAHKNNKQLLVDMIAVQDLEKRAKELDEMGADYIAVHTGYDLQAEGQSPLESLRTVKSVIKNSKVAVAGGIKPDTIKDIVAESPDLVIVGGGIANADDPVEAAKQCRAAIEGK.

Belongs to the HPS/KGPDC family. HPS subfamily.

The enzyme catalyses D-ribulose 5-phosphate + formaldehyde = D-arabino-hex-3-ulose 6-phosphate. It functions in the pathway one-carbon metabolism; formaldehyde assimilation via RuMP pathway; D-fructose 6-phosphate from D-ribulose 5-phosphate and formaldehyde: step 1/2. Catalyzes the condensation of ribulose 5-phosphate with formaldehyde to form 3-hexulose 6-phosphate. The polypeptide is 3-hexulose-6-phosphate synthase (Staphylococcus aureus (strain USA300)).